A 234-amino-acid polypeptide reads, in one-letter code: Peroxisomal coenzyme A diphosphatase ndx-8 (234 aa).

In terms of domain architecture, Nudix hydrolase spans 27–162; that stretch reads EQDAGVLILL…TFLIDEFYMV (136 aa). The short motif at 66 to 90 is the Nudix box element; it reads GGMMDDEDGQNVRRTAIREAYEEVG. Positions 84 and 88 each coordinate Mg(2+). Residues 170 to 190 form a helical membrane-spanning segment; the sequence is YPTTYGVTALMCIVVAIGLLG. Residues 232–234 carry the Microbody targeting signal motif; that stretch reads SKI.

This sequence belongs to the Nudix hydrolase family. Mg(2+) is required as a cofactor. The cofactor is Mn(2+).

It is found in the peroxisome membrane. In terms of biological role, coenzyme A diphosphatase which mediates the cleavage of CoA into 3',5'-ADP and 4'-phosphopantetheine. The sequence is that of Peroxisomal coenzyme A diphosphatase ndx-8 (ndx-8) from Caenorhabditis elegans.